A 180-amino-acid chain; its full sequence is ATP-dependent protease subunit HslV (180 aa).

Residue threonine 6 is part of the active site. Alanine 164, cysteine 167, and threonine 170 together coordinate Na(+).

The protein belongs to the peptidase T1B family. HslV subfamily. As to quaternary structure, a double ring-shaped homohexamer of HslV is capped on each side by a ring-shaped HslU homohexamer. The assembly of the HslU/HslV complex is dependent on binding of ATP.

It is found in the cytoplasm. The enzyme catalyses ATP-dependent cleavage of peptide bonds with broad specificity.. Allosterically activated by HslU binding. Its function is as follows. Protease subunit of a proteasome-like degradation complex believed to be a general protein degrading machinery. The sequence is that of ATP-dependent protease subunit HslV from Borrelia hermsii (strain HS1 / DAH).